The following is a 141-amino-acid chain: Hemoglobin subunit alpha (141 aa).

One can recognise a Globin domain in the interval 1-141 (VLSSKDKANI…VSTVLTSKYR (141 aa)). The residue at position 3 (Ser-3) is a Phosphoserine. N6-succinyllysine occurs at positions 7 and 11. Lys-16 carries the N6-acetyllysine; alternate modification. At Lys-16 the chain carries N6-succinyllysine; alternate. At Tyr-24 the chain carries Phosphotyrosine. Position 40 is an N6-succinyllysine (Lys-40). Ser-49 carries the phosphoserine modification. An O2-binding site is contributed by His-58. His-87 contacts heme b. Phosphoserine is present on Ser-102. The residue at position 108 (Thr-108) is a Phosphothreonine. Position 124 is a phosphoserine (Ser-124). 2 positions are modified to phosphothreonine: Thr-134 and Thr-137. A Phosphoserine modification is found at Ser-138.

The protein belongs to the globin family. As to quaternary structure, heterotetramer of two alpha chains and two beta chains. As to expression, red blood cells.

Functionally, involved in oxygen transport from the lung to the various peripheral tissues. Hemopressin acts as an antagonist peptide of the cannabinoid receptor CNR1. Hemopressin-binding efficiently blocks cannabinoid receptor CNR1 and subsequent signaling. This Lama glama (Llama) protein is Hemoglobin subunit alpha (HBA).